The primary structure comprises 436 residues: Exodeoxyribonuclease 7 large subunit (436 aa).

A disordered region spans residues 412 to 436; the sequence is PGGVMNKNSNTTDSTDNTENGTGEA. The segment covering 417–436 has biased composition (low complexity); that stretch reads NKNSNTTDSTDNTENGTGEA.

Belongs to the XseA family. In terms of assembly, heterooligomer composed of large and small subunits.

It localises to the cytoplasm. The enzyme catalyses Exonucleolytic cleavage in either 5'- to 3'- or 3'- to 5'-direction to yield nucleoside 5'-phosphates.. Functionally, bidirectionally degrades single-stranded DNA into large acid-insoluble oligonucleotides, which are then degraded further into small acid-soluble oligonucleotides. This chain is Exodeoxyribonuclease 7 large subunit, found in Corynebacterium jeikeium (strain K411).